We begin with the raw amino-acid sequence, 874 residues long: Alanine--tRNA ligase (874 aa).

His564, His568, Cys665, and His669 together coordinate Zn(2+).

This sequence belongs to the class-II aminoacyl-tRNA synthetase family. Requires Zn(2+) as cofactor.

Its subcellular location is the cytoplasm. The catalysed reaction is tRNA(Ala) + L-alanine + ATP = L-alanyl-tRNA(Ala) + AMP + diphosphate. Its function is as follows. Catalyzes the attachment of alanine to tRNA(Ala) in a two-step reaction: alanine is first activated by ATP to form Ala-AMP and then transferred to the acceptor end of tRNA(Ala). Also edits incorrectly charged Ser-tRNA(Ala) and Gly-tRNA(Ala) via its editing domain. This chain is Alanine--tRNA ligase, found in Cupriavidus metallidurans (strain ATCC 43123 / DSM 2839 / NBRC 102507 / CH34) (Ralstonia metallidurans).